Consider the following 209-residue polypeptide: Pyridoxine/pyridoxamine 5'-phosphate oxidase (209 aa).

Substrate contacts are provided by residues 2-5 and lysine 66; that span reads RVEY. FMN-binding positions include 61-66, 76-77, lysine 83, and glutamine 105; these read RTVLCK and FT. 3 residues coordinate substrate: tyrosine 123, arginine 127, and serine 131. FMN is bound by residues 140–141 and tryptophan 186; that span reads QS. 192 to 194 serves as a coordination point for substrate; that stretch reads RVH. Arginine 196 serves as a coordination point for FMN.

Belongs to the pyridoxamine 5'-phosphate oxidase family. Homodimer. It depends on FMN as a cofactor.

The enzyme catalyses pyridoxamine 5'-phosphate + O2 + H2O = pyridoxal 5'-phosphate + H2O2 + NH4(+). The catalysed reaction is pyridoxine 5'-phosphate + O2 = pyridoxal 5'-phosphate + H2O2. It participates in cofactor metabolism; pyridoxal 5'-phosphate salvage; pyridoxal 5'-phosphate from pyridoxamine 5'-phosphate: step 1/1. The protein operates within cofactor metabolism; pyridoxal 5'-phosphate salvage; pyridoxal 5'-phosphate from pyridoxine 5'-phosphate: step 1/1. In terms of biological role, catalyzes the oxidation of either pyridoxine 5'-phosphate (PNP) or pyridoxamine 5'-phosphate (PMP) into pyridoxal 5'-phosphate (PLP). The protein is Pyridoxine/pyridoxamine 5'-phosphate oxidase of Mycobacterium sp. (strain JLS).